A 312-amino-acid polypeptide reads, in one-letter code: Elongation factor Ts, mitochondrial (312 aa).

This sequence belongs to the EF-Ts family.

Its subcellular location is the mitochondrion. Its function is as follows. Associates with the EF-Tu.GDP complex and induces the exchange of GDP to GTP. It remains bound to the aminoacyl-tRNA.EF-Tu.GTP complex up to the GTP hydrolysis stage on the ribosome. The protein is Elongation factor Ts, mitochondrial (tsfm) of Xenopus laevis (African clawed frog).